Here is a 393-residue protein sequence, read N- to C-terminus: uncharacterized protein (393 aa).

Residues cysteine 72, cysteine 82, cysteine 85, and cysteine 160 each coordinate [4Fe-4S] cluster. Residues glutamine 215, phenylalanine 245, glutamate 267, and aspartate 313 each coordinate S-adenosyl-L-methionine. The Nucleophile role is filled by cysteine 340.

This sequence belongs to the class I-like SAM-binding methyltransferase superfamily. RNA M5U methyltransferase family.

This is an uncharacterized protein from Nitrosomonas europaea (strain ATCC 19718 / CIP 103999 / KCTC 2705 / NBRC 14298).